The following is a 94-amino-acid chain: Aspartyl/glutamyl-tRNA(Asn/Gln) amidotransferase subunit C (94 aa).

Belongs to the GatC family. In terms of assembly, heterotrimer of A, B and C subunits.

The enzyme catalyses L-glutamyl-tRNA(Gln) + L-glutamine + ATP + H2O = L-glutaminyl-tRNA(Gln) + L-glutamate + ADP + phosphate + H(+). The catalysed reaction is L-aspartyl-tRNA(Asn) + L-glutamine + ATP + H2O = L-asparaginyl-tRNA(Asn) + L-glutamate + ADP + phosphate + 2 H(+). In terms of biological role, allows the formation of correctly charged Asn-tRNA(Asn) or Gln-tRNA(Gln) through the transamidation of misacylated Asp-tRNA(Asn) or Glu-tRNA(Gln) in organisms which lack either or both of asparaginyl-tRNA or glutaminyl-tRNA synthetases. The reaction takes place in the presence of glutamine and ATP through an activated phospho-Asp-tRNA(Asn) or phospho-Glu-tRNA(Gln). This Campylobacter jejuni subsp. jejuni serotype O:6 (strain 81116 / NCTC 11828) protein is Aspartyl/glutamyl-tRNA(Asn/Gln) amidotransferase subunit C.